The following is a 1045-amino-acid chain: Collagen alpha-1(VI) chain (1045 aa).

The signal sequence occupies residues 1–24 (MKMLQGRLPLTVLHLFLLLGGGMT). Residues 65 to 255 (DIFFVLDTSE…LTDDEIDNTI (191 aa)) enclose the VWFA 1 domain. The interval 277–613 (PSRGLSGPSG…GPPGPGGPPG (337 aa)) is disordered. Positions 280–540 (GLSGPSGPPG…RGDDGRPGNG (261 aa)) are triple-helical region. Residues 297-309 (PGLPGDRGLPGDP) are compositionally biased toward low complexity. Residues 327-360 (QGIRGEKGGRGAKGSKGDKGKRGIDGVDGQKGED) show a composition bias toward basic and acidic residues. The segment covering 375–392 (DGAPGSSGPKGDPGPYGT) has biased composition (low complexity). Residues 400–409 (GTPGTGGRPG) are compositionally biased toward gly residues. Short sequence motifs (cell attachment site) lie at residues 501–503 (RGD) and 554–556 (RGD). Pro residues predominate over residues 600–613 (EGPPGPPGPGGPPG). VWFA domains lie at 638-825 (DLLF…LHNV) and 849-1035 (DITM…YQSI).

It belongs to the type VI collagen family.

It is found in the secreted. The protein resides in the extracellular space. Its subcellular location is the extracellular matrix. In terms of biological role, collagen VI acts as a cell-binding protein. The polypeptide is Collagen alpha-1(VI) chain (col6a1) (Xenopus laevis (African clawed frog)).